A 289-amino-acid polypeptide reads, in one-letter code: Acetyl-coenzyme A carboxylase carboxyl transferase subunit beta (289 aa).

Residues 34 to 289 (MWVKCNKCGE…KLINMHKNSF (256 aa)) enclose the CoA carboxyltransferase N-terminal domain. Zn(2+) is bound by residues C38, C41, C57, and C60. Residues 38 to 60 (CNKCGEILYQNDLEKNYMACNLC) form a C4-type zinc finger.

Belongs to the AccD/PCCB family. Acetyl-CoA carboxylase is a heterohexamer composed of biotin carboxyl carrier protein (AccB), biotin carboxylase (AccC) and two subunits each of ACCase subunit alpha (AccA) and ACCase subunit beta (AccD). It depends on Zn(2+) as a cofactor.

The protein localises to the cytoplasm. It catalyses the reaction N(6)-carboxybiotinyl-L-lysyl-[protein] + acetyl-CoA = N(6)-biotinyl-L-lysyl-[protein] + malonyl-CoA. The protein operates within lipid metabolism; malonyl-CoA biosynthesis; malonyl-CoA from acetyl-CoA: step 1/1. Component of the acetyl coenzyme A carboxylase (ACC) complex. Biotin carboxylase (BC) catalyzes the carboxylation of biotin on its carrier protein (BCCP) and then the CO(2) group is transferred by the transcarboxylase to acetyl-CoA to form malonyl-CoA. In Clostridium botulinum (strain Loch Maree / Type A3), this protein is Acetyl-coenzyme A carboxylase carboxyl transferase subunit beta.